The chain runs to 136 residues: Fluoride-specific ion channel FluC (136 aa).

4 helical membrane passes run Thr3–Leu23, Ala46–Phe66, Leu78–Val98, and Phe109–Leu129. Na(+) is bound by residues Gly86 and Thr89.

The protein belongs to the fluoride channel Fluc/FEX (TC 1.A.43) family.

It is found in the cell inner membrane. It carries out the reaction fluoride(in) = fluoride(out). Na(+) is not transported, but it plays an essential structural role and its presence is essential for fluoride channel function. Functionally, fluoride-specific ion channel. Important for reducing fluoride concentration in the cell, thus reducing its toxicity. The polypeptide is Fluoride-specific ion channel FluC (Erythrobacter litoralis (strain HTCC2594)).